A 95-amino-acid polypeptide reads, in one-letter code: Aspartyl/glutamyl-tRNA(Asn/Gln) amidotransferase subunit C (95 aa).

This sequence belongs to the GatC family. In terms of assembly, heterotrimer of A, B and C subunits.

It catalyses the reaction L-glutamyl-tRNA(Gln) + L-glutamine + ATP + H2O = L-glutaminyl-tRNA(Gln) + L-glutamate + ADP + phosphate + H(+). It carries out the reaction L-aspartyl-tRNA(Asn) + L-glutamine + ATP + H2O = L-asparaginyl-tRNA(Asn) + L-glutamate + ADP + phosphate + 2 H(+). Allows the formation of correctly charged Asn-tRNA(Asn) or Gln-tRNA(Gln) through the transamidation of misacylated Asp-tRNA(Asn) or Glu-tRNA(Gln) in organisms which lack either or both of asparaginyl-tRNA or glutaminyl-tRNA synthetases. The reaction takes place in the presence of glutamine and ATP through an activated phospho-Asp-tRNA(Asn) or phospho-Glu-tRNA(Gln). The chain is Aspartyl/glutamyl-tRNA(Asn/Gln) amidotransferase subunit C from Campylobacter concisus (strain 13826).